The sequence spans 396 residues: Ribosomal RNA large subunit methyltransferase I (396 aa).

The region spanning 2–79 (SVRLVLAKGR…QAESIDIAFF (78 aa)) is the PUA domain.

This sequence belongs to the methyltransferase superfamily. RlmI family.

It localises to the cytoplasm. The catalysed reaction is cytidine(1962) in 23S rRNA + S-adenosyl-L-methionine = 5-methylcytidine(1962) in 23S rRNA + S-adenosyl-L-homocysteine + H(+). Functionally, specifically methylates the cytosine at position 1962 (m5C1962) of 23S rRNA. This chain is Ribosomal RNA large subunit methyltransferase I, found in Citrobacter koseri (strain ATCC BAA-895 / CDC 4225-83 / SGSC4696).